Reading from the N-terminus, the 258-residue chain is Malonyl-[acyl-carrier protein] O-methyltransferase (258 aa).

It belongs to the methyltransferase superfamily.

It catalyses the reaction malonyl-[ACP] + S-adenosyl-L-methionine = malonyl-[ACP] methyl ester + S-adenosyl-L-homocysteine. The protein operates within cofactor biosynthesis; biotin biosynthesis. Its function is as follows. Converts the free carboxyl group of a malonyl-thioester to its methyl ester by transfer of a methyl group from S-adenosyl-L-methionine (SAM). It allows to synthesize pimeloyl-ACP via the fatty acid synthetic pathway. The sequence is that of Malonyl-[acyl-carrier protein] O-methyltransferase from Haemophilus ducreyi (strain 35000HP / ATCC 700724).